Consider the following 750-residue polypeptide: Protein psiO (750 aa).

An N-terminal signal peptide occupies residues 1–22 (MKEKIKLSLLILTSIILAVANS). The Extracellular segment spans residues 23-688 (QTQPKTLAMT…GCNTAAVVST (666 aa)). N-linked (GlcNAc...) asparagine glycosylation is present at Asn-129. The PA14 domain maps to 140-286 (QEYFPINGKG…DDYCGVCNGD (147 aa)). N-linked (GlcNAc...) asparagine glycans are attached at residues Asn-447, Asn-506, Asn-554, Asn-571, and Asn-659. The chain crosses the membrane as a helical span at residues 689-709 (AVIAGVTVAAVVGLGIFLYGG). The Cytoplasmic portion of the chain corresponds to 710–750 (KKGYDYYQDNKSKGMTGANSNPLYKESGNAGQNPLYNDNNL). Positions 727–750 (ANSNPLYKESGNAGQNPLYNDNNL) are disordered. Residues 738 to 750 (NAGQNPLYNDNNL) are compositionally biased toward polar residues.

Belongs to the prespore-cell-inducing factor family.

The protein localises to the membrane. The polypeptide is Protein psiO (psiO) (Dictyostelium discoideum (Social amoeba)).